A 208-amino-acid chain; its full sequence is 3-demethoxyubiquinol 3-hydroxylase (208 aa).

Fe cation contacts are provided by E57, E87, H90, E139, E171, and H174.

Belongs to the COQ7 family. Fe cation serves as cofactor.

It localises to the cell membrane. It catalyses the reaction a 5-methoxy-2-methyl-3-(all-trans-polyprenyl)benzene-1,4-diol + AH2 + O2 = a 3-demethylubiquinol + A + H2O. Its pathway is cofactor biosynthesis; ubiquinone biosynthesis. In terms of biological role, catalyzes the hydroxylation of 2-nonaprenyl-3-methyl-6-methoxy-1,4-benzoquinol during ubiquinone biosynthesis. The sequence is that of 3-demethoxyubiquinol 3-hydroxylase from Burkholderia ambifaria (strain ATCC BAA-244 / DSM 16087 / CCUG 44356 / LMG 19182 / AMMD) (Burkholderia cepacia (strain AMMD)).